The sequence spans 75 residues: UPF0346 protein LJ_1103 (75 aa).

This sequence belongs to the UPF0346 family.

The chain is UPF0346 protein LJ_1103 from Lactobacillus johnsonii (strain CNCM I-12250 / La1 / NCC 533).